The primary structure comprises 390 residues: Galactokinase (390 aa).

34-37 (EHTD) provides a ligand contact to substrate. Residues Ser-68 and 122–128 (GSGLSSS) each bind ATP. 2 residues coordinate Mg(2+): Ser-128 and Glu-160. The active-site Proton acceptor is the Asp-172. Position 221 (Tyr-221) interacts with substrate.

Belongs to the GHMP kinase family. GalK subfamily.

The protein resides in the cytoplasm. The enzyme catalyses alpha-D-galactose + ATP = alpha-D-galactose 1-phosphate + ADP + H(+). It participates in carbohydrate metabolism; galactose metabolism. Functionally, catalyzes the transfer of the gamma-phosphate of ATP to D-galactose to form alpha-D-galactose-1-phosphate (Gal-1-P). In Chloroflexus aurantiacus (strain ATCC 29366 / DSM 635 / J-10-fl), this protein is Galactokinase.